A 149-amino-acid chain; its full sequence is Large ribosomal subunit protein bL9 (149 aa).

This sequence belongs to the bacterial ribosomal protein bL9 family.

Its function is as follows. Binds to the 23S rRNA. This Klebsiella pneumoniae (strain 342) protein is Large ribosomal subunit protein bL9.